Reading from the N-terminus, the 180-residue chain is Ribulose bisphosphate carboxylase small subunit, chloroplastic 5 (180 aa).

Residues 1 to 56 constitute a chloroplast transit peptide; that stretch reads MASSVMSSAAVATRGNGAQASMVAPFTGLKSTASFPVSRKQNLDITSIASNGGRVR.

This sequence belongs to the RuBisCO small chain family. As to quaternary structure, heterohexadecamer of 8 large and 8 small subunits.

The protein localises to the plastid. The protein resides in the chloroplast. RuBisCO catalyzes two reactions: the carboxylation of D-ribulose 1,5-bisphosphate, the primary event in carbon dioxide fixation, as well as the oxidative fragmentation of the pentose substrate. Both reactions occur simultaneously and in competition at the same active site. Although the small subunit is not catalytic it is essential for maximal activity. The chain is Ribulose bisphosphate carboxylase small subunit, chloroplastic 5 from Solanum tuberosum (Potato).